The primary structure comprises 115 residues: NADH-ubiquinone oxidoreductase chain 3 (115 aa).

The residue at position 1 (Met-1) is an N-formylmethionine. 3 helical membrane passes run 3–23 (LMLA…IAFW), 55–75 (FFLV…LLPL), and 84–104 (LNTM…SLAY).

Core subunit of respiratory chain NADH dehydrogenase (Complex I) which is composed of 45 different subunits. Interacts with TMEM186. Interacts with TMEM242.

Its subcellular location is the mitochondrion inner membrane. It catalyses the reaction a ubiquinone + NADH + 5 H(+)(in) = a ubiquinol + NAD(+) + 4 H(+)(out). In terms of biological role, core subunit of the mitochondrial membrane respiratory chain NADH dehydrogenase (Complex I) which catalyzes electron transfer from NADH through the respiratory chain, using ubiquinone as an electron acceptor. Essential for the catalytic activity of complex I. This chain is NADH-ubiquinone oxidoreductase chain 3, found in Bos taurus (Bovine).